The sequence spans 617 residues: Secretogranin-2 (617 aa).

A signal peptide spans 1 to 27 (MAEAKTHWLGAALSLIPLIFLISGAEA). The propeptide occupies 28–30 (ASF). Residues 120-143 (QAENEPQSAPKENKPYALNSEKNF) form a disordered region. Sulfotyrosine is present on Tyr-151. Position 174 is a phosphoserine (Ser-174). The segment at 182–200 (TNEIVEEQYTPQSLATLES) is O-glycosylated at one site. Composition is skewed to basic and acidic residues over residues 257–284 (IESQ…EMKR) and 293–302 (EDLRKESKDQ). The interval 257-302 (IESQTQEEVRDSKENIEKNEQINDEMKRSGQLGIQEEDLRKESKDQ) is disordered. Ser-268 is modified (phosphoserine). Ser-432, Ser-532, Ser-555, and Ser-556 each carry phosphoserine. Residues 552–583 (NQGSSQETDKLAPVSKRFPVGPPKNDDTPNRQ) are disordered.

The protein belongs to the chromogranin/secretogranin protein family. Interacts with Secretogranin III/SCG3. O-glycosylated.

The protein resides in the secreted. Neuroendocrine protein of the granin family that regulates the biogenesis of secretory granules. The sequence is that of Secretogranin-2 (SCG2) from Homo sapiens (Human).